The primary structure comprises 476 residues: RuvB-like helicase 2 (476 aa).

ATP is bound at residue 76–83 (GPPSTGKT).

The protein belongs to the RuvB family. May form heterododecamers with RVB1. Component of the SWR1 chromatin remodeling complex, the INO80 chromatin remodeling complex, and of the R2TP complex.

The protein resides in the nucleus. The enzyme catalyses ATP + H2O = ADP + phosphate + H(+). In terms of biological role, DNA helicase which participates in several chromatin remodeling complexes, including the SWR1 and the INO80 complexes. The SWR1 complex mediates the ATP-dependent exchange of histone H2A for the H2A variant HZT1 leading to transcriptional regulation of selected genes by chromatin remodeling. The INO80 complex remodels chromatin by shifting nucleosomes and is involved in DNA repair. Also involved in pre-rRNA processing. The protein is RuvB-like helicase 2 (RVB2) of Candida glabrata (strain ATCC 2001 / BCRC 20586 / JCM 3761 / NBRC 0622 / NRRL Y-65 / CBS 138) (Yeast).